The sequence spans 32 residues: Natriuretic peptide Coa_NP1 (32 aa).

A disulfide bridge links Cys8 with Cys24.

Belongs to the natriuretic peptide family. Snake NP subfamily. As to expression, expressed by the venom gland.

It localises to the secreted. Snake venom natriuretic peptide that exhibits hypotensive and vasodepressor activity in rats. This Crotalus lutosus abyssus (Grand Canyon rattlesnake) protein is Natriuretic peptide Coa_NP1.